Here is a 426-residue protein sequence, read N- to C-terminus: MSKSEQLFEKAQKVIPGGVNSPVRAFKGVGGTPVFIQKAEGAYITDSDGKKYIDYVGSWGPMVLGHNHPAIIDAVLKAVPNGLSFGAPTESEITLAELVTKLVPSIELVRMVSSGTEATMSAIRLARGYTGRDKIIKFEGCYHGHSDSLLVKAGSGALTLGQPSGPGVPADFAKHTLTCTYNDLDSVKTAFEQYPNEIACLIVEPVAGNMNCIPPKNDFLKGLRALCDQYGAVFIIDEVMTGFRVALGGAQAYYDVKPDLTTLGKIIGGGMPVGAFGGKKEIMEYIAPTGPVYQAGTLSGNPIAMAAGLACLTELSKAGNEEKLAAQTKTLAEGFKALADKHNVPFTAQYVGGMFGLFFTEQAEITNFQEVMKCDAAKFNRFFHLMLEQGVYLAPSAFEAGFMSLAHSDEDIQATLAAADKAFAQL.

At lysine 265 the chain carries N6-(pyridoxal phosphate)lysine.

This sequence belongs to the class-III pyridoxal-phosphate-dependent aminotransferase family. HemL subfamily. In terms of assembly, homodimer. The cofactor is pyridoxal 5'-phosphate.

It is found in the cytoplasm. It carries out the reaction (S)-4-amino-5-oxopentanoate = 5-aminolevulinate. The protein operates within porphyrin-containing compound metabolism; protoporphyrin-IX biosynthesis; 5-aminolevulinate from L-glutamyl-tRNA(Glu): step 2/2. The chain is Glutamate-1-semialdehyde 2,1-aminomutase from Actinobacillus pleuropneumoniae serotype 3 (strain JL03).